The primary structure comprises 240 residues: Homeobox protein DLX-4 (240 aa).

The segment at 80–120 is disordered; sequence QPLCGPAEHPQELEADSEKPRLSPEPSERRPQAPAKKLRKP. Basic and acidic residues predominate over residues 88–110; the sequence is HPQELEADSEKPRLSPEPSERRP. A DNA-binding region (homeobox) is located at residues 117 to 176; it reads LRKPRTIYSSLQLQHLNQRFQHTQYLALPERAQLAAQLGLTQTQVKIWFQNKRSKYKKLL.

It belongs to the distal-less homeobox family. Expressed in leukemia cells and placenta. Also expressed in kidney and fetal liver.

Its subcellular location is the nucleus. Its function is as follows. May play a role in determining the production of hemoglobin S. May act as a repressor. During embryonic development, plays a role in palatogenesis. This Homo sapiens (Human) protein is Homeobox protein DLX-4 (DLX4).